We begin with the raw amino-acid sequence, 48 residues long: Protein YgdT (48 aa).

The protein is Protein YgdT (ygdT) of Escherichia coli (strain K12).